The sequence spans 905 residues: Lateral signaling target protein 2 homolog (905 aa).

Lys-87 is covalently cross-linked (Glycyl lysine isopeptide (Lys-Gly) (interchain with G-Cter in ubiquitin)). The residue at position 334 (Ser-334) is a Phosphoserine. Residues 354–441 (DEMSSLLSPP…RGQDGQSGEV (88 aa)) are disordered. 2 stretches are compositionally biased toward polar residues: residues 358–367 (SLLSPPSACQ) and 418–437 (PGNT…QDGQ). Phosphothreonine is present on Thr-512. 2 disordered regions span residues 516-552 (NPKS…DNSH) and 589-691 (PGSV…RGDV). 2 stretches are compositionally biased toward basic and acidic residues: residues 542–552 (PRAEGTGDNSH) and 605–615 (GGDKEPERIDE). The span at 647-656 (SGPQVDTASR) shows a compositional bias: polar residues. A compositionally biased stretch (basic and acidic residues) spans 659-678 (GEGEVKGQPEPEARKQDPEK). An FYVE-type zinc finger spans residues 835–895 (DEACGFCTSC…VCTHCYMFHV (61 aa)). Residues Cys-841, Cys-844, Cys-857, Cys-860, Cys-865, Cys-868, and Cys-887 each coordinate Zn(2+). Position 888 is a phosphothreonine; by MAP2K (Thr-888). Cys-890 is a Zn(2+) binding site.

The protein belongs to the lst-2 family. Interacts with TRIM3. Post-translationally, monoubiquitination at Lys-87 prevents binding to phosphatidylinositol 3-phosphate (PI3P) and localization to early endosome membranes. As to expression, enriched in brain (at protein level).

It localises to the cytoplasm. It is found in the cytosol. The protein resides in the early endosome membrane. In terms of biological role, negative regulator of epidermal growth factor receptor (EGFR) signaling. Acts by promoting EGFR degradation in endosomes when not monoubiquitinated. The polypeptide is Lateral signaling target protein 2 homolog (Zfyve28) (Mus musculus (Mouse)).